The primary structure comprises 286 residues: NADPH-dependent 7-cyano-7-deazaguanine reductase (286 aa).

A substrate-binding site is contributed by isoleucine 92–serine 94. Serine 94–lysine 95 is a binding site for NADPH. Cysteine 194 functions as the Thioimide intermediate in the catalytic mechanism. Aspartate 201 serves as the catalytic Proton donor. Histidine 233–glutamate 234 is a binding site for substrate. Arginine 262–glycine 263 provides a ligand contact to NADPH.

This sequence belongs to the GTP cyclohydrolase I family. QueF type 2 subfamily. Homodimer.

Its subcellular location is the cytoplasm. The catalysed reaction is 7-aminomethyl-7-carbaguanine + 2 NADP(+) = 7-cyano-7-deazaguanine + 2 NADPH + 3 H(+). The protein operates within tRNA modification; tRNA-queuosine biosynthesis. Its function is as follows. Catalyzes the NADPH-dependent reduction of 7-cyano-7-deazaguanine (preQ0) to 7-aminomethyl-7-deazaguanine (preQ1). This Shewanella sp. (strain MR-7) protein is NADPH-dependent 7-cyano-7-deazaguanine reductase.